The primary structure comprises 117 residues: Large ribosomal subunit protein bL20 (117 aa).

Belongs to the bacterial ribosomal protein bL20 family.

In terms of biological role, binds directly to 23S ribosomal RNA and is necessary for the in vitro assembly process of the 50S ribosomal subunit. It is not involved in the protein synthesizing functions of that subunit. This chain is Large ribosomal subunit protein bL20, found in Leptospira biflexa serovar Patoc (strain Patoc 1 / Ames).